We begin with the raw amino-acid sequence, 462 residues long: Bindin (462 aa).

A signal peptide spans 1–19; the sequence is MARQLSVILVALTLTTALA. The propeptide occupies 20 to 244; that stretch reads ENFPTRTSAP…DSGRSARKKR (225 aa). Disordered stretches follow at residues 155–194 and 221–278; these read DDRR…APKD and RTRR…QGMG. The fucose-binding domain stretch occupies residues 372 to 380; that stretch reads LRHLRHHSN.

The protein belongs to the bindin family.

The protein resides in the cytoplasmic vesicle. It localises to the secretory vesicle. The protein localises to the acrosome lumen. Species-specific sea urchin sperm protein required for adhesion of sperm to the egg surface during fertilization. Bindin coats the acrosomal process after it is externalized by the acrosome reaction. It binds to sulfated, fucose-containing polysaccharides on the vitelline layer receptor proteoglycans which cover the egg plasma membrane. This is Bindin from Lytechinus variegatus (Green sea urchin).